The following is a 227-amino-acid chain: Probable methylthioribulose-1-phosphate dehydratase (227 aa).

Residue cysteine 87 coordinates substrate. Zn(2+)-binding residues include histidine 105 and histidine 107. Residue glutamate 129 is the Proton donor/acceptor of the active site. Residue histidine 185 coordinates Zn(2+).

The protein belongs to the aldolase class II family. MtnB subfamily. The cofactor is Zn(2+).

Its subcellular location is the cytoplasm. The catalysed reaction is 5-(methylsulfanyl)-D-ribulose 1-phosphate = 5-methylsulfanyl-2,3-dioxopentyl phosphate + H2O. Its pathway is amino-acid biosynthesis; L-methionine biosynthesis via salvage pathway; L-methionine from S-methyl-5-thio-alpha-D-ribose 1-phosphate: step 2/6. Its function is as follows. Catalyzes the dehydration of methylthioribulose-1-phosphate (MTRu-1-P) into 2,3-diketo-5-methylthiopentyl-1-phosphate (DK-MTP-1-P). In Drosophila ananassae (Fruit fly), this protein is Probable methylthioribulose-1-phosphate dehydratase.